The sequence spans 105 residues: Large ribosomal subunit protein bL21 (105 aa).

The protein belongs to the bacterial ribosomal protein bL21 family. As to quaternary structure, part of the 50S ribosomal subunit. Contacts protein L20.

Functionally, this protein binds to 23S rRNA in the presence of protein L20. In Rickettsia peacockii (strain Rustic), this protein is Large ribosomal subunit protein bL21.